Here is a 474-residue protein sequence, read N- to C-terminus: tRNA-2-methylthio-N(6)-dimethylallyladenosine synthase (474 aa).

In terms of domain architecture, MTTase N-terminal spans 3 to 120; the sequence is KKLHIKTWGC…LPEMINHVQG (118 aa). 6 residues coordinate [4Fe-4S] cluster: C12, C49, C83, C157, C161, and C164. The region spanning 143 to 375 is the Radical SAM core domain; the sequence is RAEGPTAFVS…QQRISQQAME (233 aa). Residues 378 to 441 enclose the TRAM domain; the sequence is RKMVGTVQRV…ASSLRGILLR (64 aa).

This sequence belongs to the methylthiotransferase family. MiaB subfamily. Monomer. [4Fe-4S] cluster is required as a cofactor.

It is found in the cytoplasm. It carries out the reaction N(6)-dimethylallyladenosine(37) in tRNA + (sulfur carrier)-SH + AH2 + 2 S-adenosyl-L-methionine = 2-methylsulfanyl-N(6)-dimethylallyladenosine(37) in tRNA + (sulfur carrier)-H + 5'-deoxyadenosine + L-methionine + A + S-adenosyl-L-homocysteine + 2 H(+). In terms of biological role, catalyzes the methylthiolation of N6-(dimethylallyl)adenosine (i(6)A), leading to the formation of 2-methylthio-N6-(dimethylallyl)adenosine (ms(2)i(6)A) at position 37 in tRNAs that read codons beginning with uridine. This is tRNA-2-methylthio-N(6)-dimethylallyladenosine synthase from Yersinia pestis bv. Antiqua (strain Angola).